A 277-amino-acid chain; its full sequence is Inositol monophosphatase 1 (277 aa).

Glutamate 70, aspartate 90, isoleucine 92, and aspartate 93 together coordinate Mg(2+). Glutamate 70 contacts substrate. 92–95 lines the substrate pocket; it reads IDGT. The residue at position 168 (threonine 168) is a Phosphothreonine. Substrate is bound by residues 194–196, glutamate 213, and aspartate 220; that span reads GTA. Aspartate 220 serves as a coordination point for Mg(2+).

This sequence belongs to the inositol monophosphatase superfamily. In terms of assembly, homodimer. Requires Mg(2+) as cofactor. In terms of processing, the N-terminus is blocked.

It localises to the cytoplasm. It catalyses the reaction a myo-inositol phosphate + H2O = myo-inositol + phosphate. The enzyme catalyses 1D-myo-inositol 1-phosphate + H2O = myo-inositol + phosphate. The catalysed reaction is 1D-myo-inositol 2-phosphate + H2O = myo-inositol + phosphate. It carries out the reaction 1D-myo-inositol 3-phosphate + H2O = myo-inositol + phosphate. It catalyses the reaction 1D-myo-inositol 4-phosphate + H2O = myo-inositol + phosphate. The enzyme catalyses 1D-myo-inositol 5-phosphate + H2O = myo-inositol + phosphate. The catalysed reaction is 1D-myo-inositol 6-phosphate + H2O = myo-inositol + phosphate. It carries out the reaction scyllo-inositol 1-phosphate + H2O = scyllo-inositol + phosphate. It catalyses the reaction alpha-D-galactose 1-phosphate + H2O = D-galactose + phosphate. The enzyme catalyses alpha-D-glucose 1-phosphate + H2O = D-glucose + phosphate. The catalysed reaction is D-glucose 6-phosphate + H2O = D-glucose + phosphate. It carries out the reaction beta-D-fructose 1-phosphate + H2O = D-fructose + phosphate. It catalyses the reaction glycerol 2-phosphate + H2O = glycerol + phosphate. The enzyme catalyses adenosine 2'-phosphate + H2O = adenosine + phosphate. It functions in the pathway polyol metabolism; myo-inositol biosynthesis; myo-inositol from D-glucose 6-phosphate: step 2/2. Its activity is regulated as follows. Activity with myo-inositol monophosphate and D-galactose 1-phosphate is inhibited by Li(+), Ca(2+) and Mn(2+), but also by Mg(2+) at concentrations above 3 mM. Its function is as follows. Phosphatase involved in the dephosphorylation of myo-inositol monophosphate to generate myo-inositol. Is also able to dephosphorylate scyllo-inositol-phosphate, myo-inositol 1,4-diphosphate, scyllo-inositol-1,3-diphosphate and scyllo-inositol-1,4-diphosphate. Also dephosphorylates in vitro other sugar-phosphates including D-galactose-1-phosphate, glucose-1-phosphate, glucose-6-phosphate, fructose-1-phosphate, beta-glycerophosphate and 2'-AMP. Responsible for the provision of inositol required for synthesis of phosphatidylinositol and polyphosphoinositides, and involved in maintaining normal brain function. Has been implicated as the pharmacological target for lithium Li(+) action in brain. Is equally active with myo-inositol monophosphate and D-galactose 1-phosphate. The sequence is that of Inositol monophosphatase 1 (IMPA1) from Bos taurus (Bovine).